The primary structure comprises 235 residues: Ribosomal RNA small subunit methyltransferase G (235 aa).

S-adenosyl-L-methionine-binding positions include Gly-98, Met-103, Val-149 to Glu-150, and Arg-164.

The protein belongs to the methyltransferase superfamily. RNA methyltransferase RsmG family.

Its subcellular location is the cytoplasm. It carries out the reaction guanosine(527) in 16S rRNA + S-adenosyl-L-methionine = N(7)-methylguanosine(527) in 16S rRNA + S-adenosyl-L-homocysteine. Specifically methylates the N7 position of guanine in position 527 of 16S rRNA. The sequence is that of Ribosomal RNA small subunit methyltransferase G from Cupriavidus pinatubonensis (strain JMP 134 / LMG 1197) (Cupriavidus necator (strain JMP 134)).